The primary structure comprises 626 residues: MDGLGEKKPWGKLSRLLGAETESSSELFLYKKEWTIGRKKACDLSFPGNKLVSGEHCKITVNEESGSVSLEDTSTNGTVINKLKVVKKQTYPLKNGDVIYVVYRKNEPEQNVAYLYKSLNQAEDSMQNPADTSGSEEADTQTLSSQDDQLSYEEPQPSTSTSSLFSTPTTSASEPACTLLYKSQASVPGVQLESGEKSGESLEGHSSTSDATAHEKGSLGPPKKRMRTEDLWTGNKNLVSASCSKGASDESKTPSMKPDKMEETLTCIICQELLHDCVSLQPCMHTFCAACYSGWMERSSLCPTCRCPVERICKNHILNNLVEAYLIQHPEKCRSEEDRCSMDARNKITQDMLQPKVRRSFSDEEGSSEDLLELSDVDSESSDISQPYTVCRQCPGYVRHNIQPPPYPPPSDTEASRTQGDAPSTSTNFPTATQEYVCPSHGSHVICTCCFQPMPDRRAEREHNSHVAPQQCTICLEPFCHMYWGCNRMGCFGCLAPFCELNLGDKCLDGVLNNNNYESDILKNYLASRGLTWKDMLNESLSAAQRGVFMLPDYRINGTTVLCYFCGLRNFRILTYQYRQNIPASELPVTVTSRPNCYWGRNCRTQVKAHHAMKFNHICEQTRFKN.

The 52-residue stretch at 34–85 folds into the FHA domain; that stretch reads WTIGRKKACDLSFPGNKLVSGEHCKITVNEESGSVSLEDTSTNGTVINKLKV. Polar residues-rich tracts occupy residues 123-133 and 140-149; these read EDSMQNPADTS and TQTLSSQDDQ. Disordered stretches follow at residues 123 to 170 and 188 to 229; these read EDSM…TPTT and PGVQ…MRTE. Positions 158-170 are enriched in low complexity; that stretch reads STSTSSLFSTPTT. The span at 194 to 203 shows a compositional bias: basic and acidic residues; that stretch reads SGEKSGESLE. Residues 267-306 form an RING-type zinc finger; it reads CIICQELLHDCVSLQPCMHTFCAACYSGWMERSSLCPTCR. Disordered stretches follow at residues 351–387 and 402–428; these read DMLQPKVRRSFSDEEGSSEDLLELSDVDSESSDISQP and IQPPPYPPPSDTEASRTQGDAPSTSTN. The segment covering 363–381 has biased composition (acidic residues); the sequence is DEEGSSEDLLELSDVDSES. The segment covering 416–428 has biased composition (polar residues); it reads SRTQGDAPSTSTN. The PBZ-type zinc finger occupies 595-617; it reads PNCYWGRNCRTQVKAHHAMKFNH.

Belongs to the CHFR family.

It localises to the nucleus. The protein localises to the PML body. The catalysed reaction is S-ubiquitinyl-[E2 ubiquitin-conjugating enzyme]-L-cysteine + [acceptor protein]-L-lysine = [E2 ubiquitin-conjugating enzyme]-L-cysteine + N(6)-ubiquitinyl-[acceptor protein]-L-lysine.. Its pathway is protein modification; protein ubiquitination. Functionally, E3 ubiquitin-protein ligase that functions in the antephase checkpoint by actively delaying passage into mitosis in response to microtubule poisons. Acts in early prophase before chromosome condensation, when the centrosome move apart from each other along the periphery of the nucleus. Probably involved in signaling the presence of mitotic stress caused by microtubule poisons by mediating the 'Lys-48'-linked ubiquitination of target proteins, leading to their degradation by the proteasome. May also promote the formation of 'Lys-63'-linked polyubiquitin chains and functions with the specific ubiquitin-conjugating ubc13-mms2 (ube2n-ube2v2) heterodimer. Substrates that are polyubiquitinated at 'Lys-63' are usually not targeted for degradation, but are rather involved in signaling cellular stress. The chain is E3 ubiquitin-protein ligase CHFR (chfr) from Xenopus tropicalis (Western clawed frog).